Consider the following 353-residue polypeptide: UPF0283 membrane protein YcjF (353 aa).

Over residues 1-19 (MSEPLKPRIDFAEPLKEEP) the composition is skewed to basic and acidic residues. The segment at 1–35 (MSEPLKPRIDFAEPLKEEPTSAFKAQQTFSEAESR) is disordered. 3 helical membrane passes run 70–90 (MVMG…VQWT), 100–120 (VALG…GSVV), and 213–233 (ESTL…FIAW).

Belongs to the UPF0283 family.

The protein resides in the cell inner membrane. In Salmonella enteritidis PT4 (strain P125109), this protein is UPF0283 membrane protein YcjF.